The following is a 1363-amino-acid chain: Spike glycoprotein (1363 aa).

An N-terminal signal peptide occupies residues 1-13 (MFLILLISLPTAF). Topologically, residues 14–1307 (AVIGDLKCTT…GTYEYYVKWP (1294 aa)) are extracellular. Residues 15–298 (VIGDLKCTTV…DFMSEIKCKT (284 aa)) form the BetaCoV S1-NTD domain. 5 disulfide bridges follow: cysteine 21–cysteine 165, cysteine 160–cysteine 193, cysteine 172–cysteine 252, cysteine 286–cysteine 296, and cysteine 331–cysteine 356. Residues asparagine 59 and asparagine 133 are each glycosylated (N-linked (GlcNAc...) asparagine; by host). An N-linked (GlcNAc...) asparagine; by host glycan is attached at asparagine 198. A BetaCoV S1-CTD domain is found at 329–617 (PDCNIEAWLN…DVNSGTTCST (289 aa)). N-linked (GlcNAc...) asparagine; by host glycosylation is present at asparagine 359. 2 cysteine pairs are disulfide-bonded: cysteine 374–cysteine 427 and cysteine 386–cysteine 615. Asparagine 437, asparagine 649, asparagine 676, asparagine 696, asparagine 714, asparagine 739, and asparagine 788 each carry an N-linked (GlcNAc...) asparagine; by host glycan. Fusion peptide regions lie at residues 914 to 935 (SAIE…VEAY) and 933 to 953 (EAYN…VQSY). A glycan (N-linked (GlcNAc...) asparagine; by host) is linked at asparagine 937. Cysteine 938 and cysteine 949 form a disulfide bridge. A heptad repeat 1 region spans residues 1014–1064 (QKLIANAFNNALGAIQEGFDATNSALVKIQAVVNANAEALNNLLQQLSNRF). Residues 1043–1087 (QAVVNANAEALNNLLQQLSNRFGAISSSLQEILSRLDALEAQAQI) adopt a coiled-coil conformation. Asparagine 1194, asparagine 1224, asparagine 1234, asparagine 1253, asparagine 1267, and asparagine 1288 each carry an N-linked (GlcNAc...) asparagine; by host glycan. The interval 1258-1296 (APDLSLDYINVTFLDLQDEMNRLQEAIKVLNQSYINLKD) is heptad repeat 2. Residues 1269 to 1297 (TFLDLQDEMNRLQEAIKVLNQSYINLKDI) are a coiled coil. A helical membrane pass occupies residues 1308–1328 (WYVWLLIGFAGVAMLVLLFFI). The Cytoplasmic segment spans residues 1329 to 1363 (CCCTGCGTSCFKKCGGCCDDYTGHQELVIKTSHDD). A KxHxx motif is present at residues 1359 to 1363 (TSHDD).

This sequence belongs to the betacoronaviruses spike protein family. As to quaternary structure, homotrimer; each monomer consists of a S1 and a S2 subunit. The resulting peplomers protrude from the virus surface as spikes. Specific enzymatic cleavages in vivo yield mature proteins. The precursor is processed into S1 and S2 by host cell furin or another cellular protease to yield the mature S1 and S2 proteins. Additionally, a second cleavage leads to the release of a fusion peptide after viral attachment to host cell receptor. In terms of processing, the cytoplasmic Cys-rich domain is palmitoylated. Spike glycoprotein is digested within host endosomes.

The protein resides in the virion membrane. It localises to the host endoplasmic reticulum-Golgi intermediate compartment membrane. It is found in the host cell membrane. In terms of biological role, attaches the virion to the cell membrane by interacting with host receptor, initiating the infection. Functionally, mediates fusion of the virion and cellular membranes by acting as a class I viral fusion protein. Under the current model, the protein has at least three conformational states: pre-fusion native state, pre-hairpin intermediate state, and post-fusion hairpin state. During viral and target cell membrane fusion, the coiled coil regions (heptad repeats) assume a trimer-of-hairpins structure, positioning the fusion peptide in close proximity to the C-terminal region of the ectodomain. The formation of this structure appears to drive apposition and subsequent fusion of viral and target cell membranes. Its function is as follows. Acts as a viral fusion peptide which is unmasked following S2 cleavage occurring upon virus endocytosis. The chain is Spike glycoprotein from Bos taurus (Bovine).